A 224-amino-acid polypeptide reads, in one-letter code: Endonuclease NucS (224 aa).

Belongs to the NucS endonuclease family.

It is found in the cytoplasm. In terms of biological role, cleaves both 3' and 5' ssDNA extremities of branched DNA structures. This is Endonuclease NucS from Rhodococcus jostii (strain RHA1).